The following is a 498-amino-acid chain: Type II secretion system protein E (498 aa).

Residue 261 to 268 coordinates ATP; that stretch reads GPTGSGKS. Cys-394, Cys-397, Cys-425, and Cys-428 together coordinate Zn(2+).

The protein belongs to the GSP E family. As to quaternary structure, forms homooligomers; most probably hexamers. Interacts with OutL/GspL. Zn(2+) is required as a cofactor.

It is found in the cell inner membrane. It catalyses the reaction ATP + H2O + cellular proteinSide 1 = ADP + phosphate + cellular proteinSide 2.. Its function is as follows. ATPase component of the type II secretion system required for the energy-dependent secretion of extracellular factors such as proteases and toxins from the periplasm. Acts as a molecular motor to provide the energy that is required for assembly of the pseudopilus and the extrusion of substrates generated in the cytoplasm. The chain is Type II secretion system protein E (outE) from Pectobacterium carotovorum subsp. carotovorum (Erwinia carotovora subsp. carotovora).